Reading from the N-terminus, the 250-residue chain is 1-(5-phosphoribosyl)-5-[(5-phosphoribosylamino)methylideneamino] imidazole-4-carboxamide isomerase (250 aa).

Residue D8 is the Proton acceptor of the active site. D129 serves as the catalytic Proton donor.

The protein belongs to the HisA/HisF family.

The protein resides in the cytoplasm. It catalyses the reaction 1-(5-phospho-beta-D-ribosyl)-5-[(5-phospho-beta-D-ribosylamino)methylideneamino]imidazole-4-carboxamide = 5-[(5-phospho-1-deoxy-D-ribulos-1-ylimino)methylamino]-1-(5-phospho-beta-D-ribosyl)imidazole-4-carboxamide. The protein operates within amino-acid biosynthesis; L-histidine biosynthesis; L-histidine from 5-phospho-alpha-D-ribose 1-diphosphate: step 4/9. The chain is 1-(5-phosphoribosyl)-5-[(5-phosphoribosylamino)methylideneamino] imidazole-4-carboxamide isomerase from Desulfatibacillum aliphaticivorans.